The sequence spans 326 residues: Probable iron chelatin transport system permease protein jhp_0822 (326 aa).

The next 10 helical transmembrane spans lie at 7-27 (IALA…ESLS), 64-84 (ILAL…QTIL), 91-111 (PFLL…IAVV), 113-133 (SNIA…VLAM), 142-162 (LSLV…AGAI), 164-184 (FFVI…SLSL), 187-207 (YKDC…LFLL), 241-261 (VASA…LVIP), 275-295 (LLLS…VVAK), and 301-321 (DLPV…WLLF).

This sequence belongs to the binding-protein-dependent transport system permease family. FecCD subfamily.

The protein localises to the cell inner membrane. In terms of biological role, part of a binding-protein-dependent transport system for an iron chelatin; probably responsible for the translocation of the substrate across the membrane. This is Probable iron chelatin transport system permease protein jhp_0822 from Helicobacter pylori (strain J99 / ATCC 700824) (Campylobacter pylori J99).